Consider the following 198-residue polypeptide: FMN-dependent NADH:quinone oxidoreductase (198 aa).

Residues 92–95 and 136–139 contribute to the FMN site; these read MWNL and SRGG.

This sequence belongs to the azoreductase type 1 family. In terms of assembly, homodimer. It depends on FMN as a cofactor.

It catalyses the reaction 2 a quinone + NADH + H(+) = 2 a 1,4-benzosemiquinone + NAD(+). The enzyme catalyses N,N-dimethyl-1,4-phenylenediamine + anthranilate + 2 NAD(+) = 2-(4-dimethylaminophenyl)diazenylbenzoate + 2 NADH + 2 H(+). Functionally, quinone reductase that provides resistance to thiol-specific stress caused by electrophilic quinones. In terms of biological role, also exhibits azoreductase activity. Catalyzes the reductive cleavage of the azo bond in aromatic azo compounds to the corresponding amines. The sequence is that of FMN-dependent NADH:quinone oxidoreductase from Clostridium perfringens (strain SM101 / Type A).